The sequence spans 320 residues: Mitochondrial ribosome-associated GTPase 1 (320 aa).

The 173-residue stretch at 37-209 (LKQMRASPRK…LLDTPGVLPP (173 aa)) folds into the CP-type G domain. Residues 81–84 (NKMD), 153–158 (NVGKSS), and G205 each bind GTP.

It belongs to the TRAFAC class YlqF/YawG GTPase family. MTG1 subfamily.

The protein localises to the mitochondrion inner membrane. Its function is as follows. Plays a role in the regulation of the mitochondrial ribosome assembly and of translational activity. Displays mitochondrial GTPase activity. The sequence is that of Mitochondrial ribosome-associated GTPase 1 from Ictalurus punctatus (Channel catfish).